Consider the following 238-residue polypeptide: Ribosomal RNA large subunit methyltransferase E (238 aa).

Positions 85, 87, 113, 129, and 153 each coordinate S-adenosyl-L-methionine. The active-site Proton acceptor is the Lys193.

It belongs to the class I-like SAM-binding methyltransferase superfamily. RNA methyltransferase RlmE family.

Its subcellular location is the cytoplasm. The enzyme catalyses uridine(2552) in 23S rRNA + S-adenosyl-L-methionine = 2'-O-methyluridine(2552) in 23S rRNA + S-adenosyl-L-homocysteine + H(+). In terms of biological role, specifically methylates the uridine in position 2552 of 23S rRNA at the 2'-O position of the ribose in the fully assembled 50S ribosomal subunit. This is Ribosomal RNA large subunit methyltransferase E from Ruegeria sp. (strain TM1040) (Silicibacter sp.).